Here is a 524-residue protein sequence, read N- to C-terminus: MATQEIIDSALPYLTKWYTVITLAALVFLISSNIKNYVKAKKLKCRDPPYFKGAGWTGISPLIEIIKVKGNGRLARFWPIKTFDDYPNHTFYMSIIGALKIVLTVIQENIKAVLATQFTDFSLGTRHAHFYPLLGDGIFTLDGEGWKHSRAMLRPQFARDQIGHVKALEPHIQILAKQIKLNKGKTFDIQELFFRFTVDTATEFLFGESVHSLYDEKLGIPTPNEIPGRDNFATAFNTSQHYLATRTYSQTFYFLTNPKEFRDCNAKVHYLAKYFVNKALNFTPEEIEEKSKSGYVFLYELVKQTRDPKVLQDQLLNIMVAGRDTTAGLLSFAMFELARHPEIWSKLREEIEVNFGVGEESRVEEITFESLKRCEYLKAILNETLRMYPSVPVNSRTATRDTTLPRGGGPNGTDPIFIPKGSTVAYIVYKTHRLEEYYGKDADDFRPERWFEPSTKKLGWAYVPFNGGPRICLGQQFALTEASYVITRLVQMFETVSSPPDVEYPPPKCIHLTMSHDDGVFVKM.

The chain crosses the membrane as a helical span at residues 17–34 (WYTVITLAALVFLISSNI). Cys472 provides a ligand contact to heme.

It belongs to the cytochrome P450 family. Heme serves as cofactor.

The protein localises to the membrane. In terms of biological role, together with an NADPH cytochrome P450 the enzyme system catalyzes the terminal hydroxylation as the first step in the assimilation of alkanes and fatty acids. Preferentially hydroxylates hexadecane. The chain is Cytochrome P450 52A6 (CYP52A6) from Candida tropicalis (Yeast).